Reading from the N-terminus, the 1147-residue chain is Probable phospholipid-transporting ATPase IIB (1147 aa).

Topologically, residues 1 to 146 (MADQIPLYPV…NQKYNVFTFI (146 aa)) are cytoplasmic. Residues 147–168 (PGVLYEQFKFFLNLYFLVISCS) traverse the membrane as a helical segment. Topologically, residues 169–173 (QFVPA) are extracellular. The helical transmembrane segment at 174–196 (LKIGYLYTYWAPLGFVLAVTMTR) threads the bilayer. Topologically, residues 197–380 (EAIDEFRRFQ…GLLDLELNRL (184 aa)) are cytoplasmic. A helical transmembrane segment spans residues 381-401 (TKALFLALVALSIVMVTLQGF). Residues 402–409 (VGPWYRNL) lie on the Extracellular side of the membrane. A helical membrane pass occupies residues 410-431 (FRFLLLFSYIIPISLRVNLDMG). Topologically, residues 432 to 930 (KAVYGWMMMK…GRNSYKRSAA (499 aa)) are cytoplasmic. D468 acts as the 4-aspartylphosphate intermediate in catalysis. D468, K469, and T470 together coordinate ATP. Residue D468 coordinates Mg(2+). Mg(2+) is bound at residue T470. Residues 503 to 535 (RDSYSQMQSQAGGNNTGSTPLRKAQSSAPKVRK) form a disordered region. Residues 505-530 (SYSQMQSQAGGNNTGSTPLRKAQSSA) are compositionally biased toward polar residues. Residues E591, F633, K638, K657, R686, T687, T766, G767, D768, R848, and K854 each contribute to the ATP site. A Mg(2+)-binding site is contributed by D874. ATP contacts are provided by N877 and D878. A Mg(2+)-binding site is contributed by D878. The chain crosses the membrane as a helical span at residues 931-951 (LGQFVMHRGLIISTMQAVFSS). Residues 952 to 963 (VFYFASVPLYQG) are Extracellular-facing. A helical membrane pass occupies residues 964–982 (FLMVGYATIYTMFPVFSLV). Over 983-1012 (LDQDVKPEMAMLYPELYKDLTKGRSLSFKT) the chain is Cytoplasmic. Residues 1013-1031 (FLIWVLISIYQGGILMYGA) form a helical membrane-spanning segment. The Extracellular segment spans residues 1032-1038 (LVLFESE). The helical transmembrane segment at 1039 to 1061 (FVHVVAISFTALILTELLMVALT) threads the bilayer. The Cytoplasmic segment spans residues 1062–1067 (VRTWHW). The chain crosses the membrane as a helical span at residues 1068-1088 (LMVVAEFLSLGCYVSSLAFLN). Residues 1089 to 1105 (EYFGIGRVSFGAFLDVA) lie on the Extracellular side of the membrane. Residues 1106–1130 (FITTVTFLWKVSAITVVSCLPLYVL) form a helical membrane-spanning segment. At 1131–1147 (KYLRRKLSPPSYCKLAS) the chain is on the cytoplasmic side.

It belongs to the cation transport ATPase (P-type) (TC 3.A.3) family. Type IV subfamily. The cofactor is Mg(2+).

Its subcellular location is the golgi apparatus. It is found in the trans-Golgi network membrane. The enzyme catalyses ATP + H2O + phospholipidSide 1 = ADP + phosphate + phospholipidSide 2.. The sequence is that of Probable phospholipid-transporting ATPase IIB (ATP9B) from Homo sapiens (Human).